A 1029-amino-acid polypeptide reads, in one-letter code: Tyrosine-protein kinase-like otk (1029 aa).

Positions 1-18 (MISIYGLVMALMMASVLA) are cleaved as a signal peptide. At 19–577 (SSSRFQRVPQ…GGDGFLVTRA (559 aa)) the chain is on the extracellular side. Ig-like C2-type domains lie at 21-104 (SRFQ…REAS), 105-195 (PPAK…RVMS), 247-361 (PEDL…APIS), 364-459 (PGIL…VAIN), and 464-554 (PKFS…VQLV). N-linked (GlcNAc...) asparagine glycosylation is present at Asn-35. 4 disulfide bridges follow: Cys-42–Cys-91, Cys-133–Cys-184, Cys-272–Cys-350, and Cys-395–Cys-443. 7 N-linked (GlcNAc...) asparagine glycosylation sites follow: Asn-332, Asn-413, Asn-425, Asn-440, Asn-453, Asn-508, and Asn-520. A disulfide bond links Cys-486 and Cys-538. A helical transmembrane segment spans residues 578 to 598 (VLITMTVALAYIVLVVGLMLW). The Cytoplasmic portion of the chain corresponds to 599 to 1029 (CRYRRQARKA…LSKAMQIAEK (431 aa)). Disordered stretches follow at residues 613 to 675 (LSTK…KKSA) and 714 to 756 (SPSD…KTSM). A compositionally biased stretch (polar residues) spans 651 to 669 (KSSGDAQKSDDTACSQQSR). Ser-674 is modified (phosphoserine). One can recognise a Protein kinase; inactive domain in the interval 688–1024 (LSELIQIGRG…QLGAALSKAM (337 aa)). Residues 716–727 (SDKDADTEKQHS) are compositionally biased toward basic and acidic residues.

This sequence belongs to the protein kinase superfamily. Tyr protein kinase family. Insulin receptor subfamily. In terms of assembly, interacts with plexA; component of a receptor complex that mediates the repulsive signaling in response to Semaphorin ligands.

It is found in the cell membrane. Acts as a calcium-dependent, homophilic cell adhesion molecule that regulates neural recognition during the development of the nervous system. Component of the repulsive Plexin signaling response to regulate motor axon guidance at the embryonic stage. Also component of a receptor complex that is required in the adult visual system to innervate the lamina layer; specific targeting of R1-R6 axons. The chain is Tyrosine-protein kinase-like otk from Drosophila sechellia (Fruit fly).